A 364-amino-acid chain; its full sequence is Probable dual-specificity RNA methyltransferase RlmN (364 aa).

The Proton acceptor role is filled by Glu-107. In terms of domain architecture, Radical SAM core spans 113 to 346; that stretch reads HDYGNSVCVT…ATIRREQGSD (234 aa). Cysteines 120 and 351 form a disulfide. The [4Fe-4S] cluster site is built by Cys-127, Cys-131, and Cys-134. S-adenosyl-L-methionine contacts are provided by residues 177–178, Ser-209, 232–234, and Asn-308; these read GE and SLH. Cys-351 (S-methylcysteine intermediate) is an active-site residue.

This sequence belongs to the radical SAM superfamily. RlmN family. [4Fe-4S] cluster serves as cofactor.

It is found in the cytoplasm. It catalyses the reaction adenosine(2503) in 23S rRNA + 2 reduced [2Fe-2S]-[ferredoxin] + 2 S-adenosyl-L-methionine = 2-methyladenosine(2503) in 23S rRNA + 5'-deoxyadenosine + L-methionine + 2 oxidized [2Fe-2S]-[ferredoxin] + S-adenosyl-L-homocysteine. It carries out the reaction adenosine(37) in tRNA + 2 reduced [2Fe-2S]-[ferredoxin] + 2 S-adenosyl-L-methionine = 2-methyladenosine(37) in tRNA + 5'-deoxyadenosine + L-methionine + 2 oxidized [2Fe-2S]-[ferredoxin] + S-adenosyl-L-homocysteine. Its function is as follows. Specifically methylates position 2 of adenine 2503 in 23S rRNA and position 2 of adenine 37 in tRNAs. Confers resistance to some classes of antibiotics. The polypeptide is Probable dual-specificity RNA methyltransferase RlmN (Staphylococcus aureus (strain MW2)).